The chain runs to 200 residues: NADH-quinone oxidoreductase subunit C (200 aa).

The protein belongs to the complex I 30 kDa subunit family. As to quaternary structure, NDH-1 is composed of 14 different subunits. Subunits NuoB, C, D, E, F, and G constitute the peripheral sector of the complex.

It localises to the cell inner membrane. It carries out the reaction a quinone + NADH + 5 H(+)(in) = a quinol + NAD(+) + 4 H(+)(out). Its function is as follows. NDH-1 shuttles electrons from NADH, via FMN and iron-sulfur (Fe-S) centers, to quinones in the respiratory chain. The immediate electron acceptor for the enzyme in this species is believed to be ubiquinone. Couples the redox reaction to proton translocation (for every two electrons transferred, four hydrogen ions are translocated across the cytoplasmic membrane), and thus conserves the redox energy in a proton gradient. The protein is NADH-quinone oxidoreductase subunit C of Thiobacillus denitrificans (strain ATCC 25259 / T1).